A 1925-amino-acid chain; its full sequence is Cilia- and flagella-associated protein 65 (1925 aa).

Residues 188-208 (FFTVIPQPIFLSPGITLTLPI) form a helical membrane-spanning segment. The 110-residue stretch at 877-986 (QLKLDTHKSL…THYMLRLVGV (110 aa)) folds into the MSP domain. The stretch at 1525–1550 (SQQLMRQYHKELQEWKDEKVRQEVEF) forms a coiled coil. Disordered stretches follow at residues 1645–1667 (KRKA…WGPV) and 1736–1823 (SSWE…PESQ). Basic and acidic residues-rich tracts occupy residues 1649–1661 (PREE…EKSP) and 1739–1762 (EDGK…KKEE). Acidic residues predominate over residues 1763–1804 (GEEEKGEEEEEELEEEEEEEEETEEEELGKEEIEEKEEERDE).

This sequence belongs to the CFAP65 family. As to quaternary structure, interacts with CFAP47.

Its subcellular location is the cell projection. The protein resides in the cilium. It localises to the flagellum membrane. It is found in the cytoplasmic vesicle. The protein localises to the secretory vesicle. Its subcellular location is the acrosome membrane. The protein resides in the cytoplasm. Plays a role in flagellar formation and sperm motility. The protein is Cilia- and flagella-associated protein 65 of Homo sapiens (Human).